Consider the following 498-residue polypeptide: Probable lysophospholipase BODYGUARD 3 (498 aa).

Residues M1–Y55 form the signal peptide. A lipid anchor (N-palmitoyl cysteine) is attached at C56. One can recognise an AB hydrolase-1 domain in the interval V220–P326. H224 is an active-site residue. Residue S297 is the Nucleophile of the active site. Catalysis depends on charge relay system residues D446 and H474.

It localises to the cell membrane. Its subcellular location is the secreted. The protein resides in the cell wall. Functionally, involved in cuticle development and morphogenesis. This is Probable lysophospholipase BODYGUARD 3 from Arabidopsis thaliana (Mouse-ear cress).